Here is a 185-residue protein sequence, read N- to C-terminus: Adenine phosphoribosyltransferase (185 aa).

Belongs to the purine/pyrimidine phosphoribosyltransferase family. Homodimer.

The protein resides in the cytoplasm. The catalysed reaction is AMP + diphosphate = 5-phospho-alpha-D-ribose 1-diphosphate + adenine. It functions in the pathway purine metabolism; AMP biosynthesis via salvage pathway; AMP from adenine: step 1/1. Catalyzes a salvage reaction resulting in the formation of AMP, that is energically less costly than de novo synthesis. The chain is Adenine phosphoribosyltransferase from Arthrobacter sp. (strain FB24).